Here is a 232-residue protein sequence, read N- to C-terminus: Orotidine 5'-phosphate decarboxylase (232 aa).

Residues D11, K33, 60 to 69 (DLKFHDIPTT), T120, R181, Q191, G211, and R212 each bind substrate. K62 (proton donor) is an active-site residue.

It belongs to the OMP decarboxylase family. Type 1 subfamily. In terms of assembly, homodimer.

It carries out the reaction orotidine 5'-phosphate + H(+) = UMP + CO2. Its pathway is pyrimidine metabolism; UMP biosynthesis via de novo pathway; UMP from orotate: step 2/2. Its function is as follows. Catalyzes the decarboxylation of orotidine 5'-monophosphate (OMP) to uridine 5'-monophosphate (UMP). This is Orotidine 5'-phosphate decarboxylase from Tolumonas auensis (strain DSM 9187 / NBRC 110442 / TA 4).